The following is a 339-amino-acid chain: Lipopolysaccharide 1,2-glucosyltransferase (339 aa).

Residues 35–40 (GIDENY) and 132–133 (DA) contribute to the UDP site. Positions 132 and 134 each coordinate Mg(2+). 2 consecutive short sequence motifs (DXD) follow at residues 132–134 (DAD) and 219–221 (DQD). His268 provides a ligand contact to Mg(2+). 268–274 (HYTGITK) contacts UDP.

The protein belongs to the glycosyltransferase 8 family. Requires Mg(2+) as cofactor.

The protein localises to the cell inner membrane. The catalysed reaction is UDP-glucose + [lipopolysaccharide] = UDP + D-glucosyl-[lipopolysaccharide].. It participates in bacterial outer membrane biogenesis; LPS core biosynthesis. Glucosyltransferase involved in the biosynthesis of the core oligosaccharide region of lipopolysaccharide (LPS). Catalyzes the addition of a glucose (glucose II) to the outer-core galactose I. Has a marked preference for its specific donor substrate, but it appears to have a relaxed specificity for alternate LPS acceptor residues, providing the overall size of the acceptor is conserved. The chain is Lipopolysaccharide 1,2-glucosyltransferase from Escherichia coli.